We begin with the raw amino-acid sequence, 291 residues long: ATP phosphoribosyltransferase (291 aa).

It belongs to the ATP phosphoribosyltransferase family. Long subfamily. Mg(2+) serves as cofactor.

The protein resides in the cytoplasm. The catalysed reaction is 1-(5-phospho-beta-D-ribosyl)-ATP + diphosphate = 5-phospho-alpha-D-ribose 1-diphosphate + ATP. It participates in amino-acid biosynthesis; L-histidine biosynthesis; L-histidine from 5-phospho-alpha-D-ribose 1-diphosphate: step 1/9. Feedback inhibited by histidine. Catalyzes the condensation of ATP and 5-phosphoribose 1-diphosphate to form N'-(5'-phosphoribosyl)-ATP (PR-ATP). Has a crucial role in the pathway because the rate of histidine biosynthesis seems to be controlled primarily by regulation of HisG enzymatic activity. The polypeptide is ATP phosphoribosyltransferase (Geotalea daltonii (strain DSM 22248 / JCM 15807 / FRC-32) (Geobacter daltonii)).